The following is a 124-amino-acid chain: Large ribosomal subunit protein uL14 (124 aa).

The protein belongs to the universal ribosomal protein uL14 family. In terms of assembly, part of the 50S ribosomal subunit. Forms a cluster with proteins L3 and L19. In the 70S ribosome, L14 and L19 interact and together make contacts with the 16S rRNA in bridges B5 and B8.

In terms of biological role, binds to 23S rRNA. Forms part of two intersubunit bridges in the 70S ribosome. This is Large ribosomal subunit protein uL14 from Mycoplasmoides gallisepticum (strain R(low / passage 15 / clone 2)) (Mycoplasma gallisepticum).